A 209-amino-acid chain; its full sequence is 60S ribosomal subunit assembly/export protein loc-1 (209 aa).

Disordered regions lie at residues 1–53 (MAPT…SKGR) and 135–209 (REAR…AAPE). Basic and acidic residues-rich tracts occupy residues 20–33 (GSKD…DGVL) and 135–159 (REAR…TKDS). Residues 126 to 170 (IKARQMEEIREARRAEAEKKEAERKARLEETKDSLRKKRKRSKQS) are a coiled coil.

Belongs to the LOC1 family. Component of the 66S pre-ribosomal particle.

It is found in the nucleus. The protein resides in the nucleolus. Functionally, required for efficient assembly and nuclear export of the 60S ribosomal subunit. This Neurospora crassa (strain ATCC 24698 / 74-OR23-1A / CBS 708.71 / DSM 1257 / FGSC 987) protein is 60S ribosomal subunit assembly/export protein loc-1 (loc-1).